A 608-amino-acid polypeptide reads, in one-letter code: Glutamine--fructose-6-phosphate aminotransferase [isomerizing] (608 aa).

Cysteine 2 acts as the Nucleophile; for GATase activity in catalysis. A Glutamine amidotransferase type-2 domain is found at 2-217; that stretch reads CGIVGIVGNQ…DGDWAVIGKT (216 aa). 2 consecutive SIS domains span residues 281 to 422 and 456 to 598; these read ISDA…ARGT and LSRE…VDQP. Catalysis depends on lysine 603, which acts as the For Fru-6P isomerization activity.

The protein resides in the cytoplasm. The catalysed reaction is D-fructose 6-phosphate + L-glutamine = D-glucosamine 6-phosphate + L-glutamate. Functionally, involved in the production of the root hair deformation (HAD) factor specifically on medicago. The protein is Glutamine--fructose-6-phosphate aminotransferase [isomerizing] (nodM) of Rhizobium meliloti (strain 1021) (Ensifer meliloti).